The following is a 348-amino-acid chain: Dihydroorotase (348 aa).

The Zn(2+) site is built by histidine 17 and histidine 19. Residues 19–21 (HLR) and asparagine 45 contribute to the substrate site. Positions 103, 140, and 178 each coordinate Zn(2+). Lysine 103 carries the post-translational modification N6-carboxylysine. Position 140 (histidine 140) interacts with substrate. Leucine 223 is a substrate binding site. Aspartate 251 lines the Zn(2+) pocket. Residue aspartate 251 is part of the active site. 2 residues coordinate substrate: histidine 255 and alanine 267.

The protein belongs to the metallo-dependent hydrolases superfamily. DHOase family. Class II DHOase subfamily. Homodimer. It depends on Zn(2+) as a cofactor.

It carries out the reaction (S)-dihydroorotate + H2O = N-carbamoyl-L-aspartate + H(+). It functions in the pathway pyrimidine metabolism; UMP biosynthesis via de novo pathway; (S)-dihydroorotate from bicarbonate: step 3/3. Catalyzes the reversible cyclization of carbamoyl aspartate to dihydroorotate. In Salmonella newport (strain SL254), this protein is Dihydroorotase.